The sequence spans 74 residues: Complement C5a anaphylatoxin (74 aa).

An involved in C5AR1 binding region spans residues 15–44 (YAMLKKCCYDGAYRNDDETCEERAARIKIG). Intrachain disulfides connect cysteine 21–cysteine 47, cysteine 22–cysteine 54, and cysteine 34–cysteine 55. The Anaphylatoxin-like domain maps to 21 to 55 (CCYDGAYRNDDETCEERAARIKIGPKCVKAFKDCC). The interval 72–74 (LGR) is required for 90% of C5a activity; although Arg-74 is not essential.

Its subcellular location is the secreted. Mediator of local inflammatory process released following cleavage by C5 convertase. Acts by binding to its receptor (C5AR1 or C5AR2), activating G protein-coupled receptor signaling and inducing a variety of responses including intracellular calcium release, contraction of smooth muscle, increased vascular permeability, and histamine release from mast cells and basophilic leukocytes. C5a is also a potent chemokine which stimulates the locomotion of polymorphonuclear leukocytes and directs their migration toward sites of inflammation. In Sus scrofa (Pig), this protein is Complement C5a anaphylatoxin (C5).